Consider the following 76-residue polypeptide: Large ribosomal subunit protein uL24 (76 aa).

The protein belongs to the universal ribosomal protein uL24 family. In terms of assembly, part of the 50S ribosomal subunit.

In terms of biological role, one of two assembly initiator proteins, it binds directly to the 5'-end of the 23S rRNA, where it nucleates assembly of the 50S subunit. Functionally, one of the proteins that surrounds the polypeptide exit tunnel on the outside of the subunit. In Campylobacter hominis (strain ATCC BAA-381 / DSM 21671 / CCUG 45161 / LMG 19568 / NCTC 13146 / CH001A), this protein is Large ribosomal subunit protein uL24.